The sequence spans 142 residues: Transcriptional regulator MraZ (142 aa).

SpoVT-AbrB domains are found at residues 5–51 and 77–120; these read SSAL…PRPE and AQDV…DAAS.

Belongs to the MraZ family. In terms of assembly, forms oligomers.

The protein resides in the cytoplasm. It localises to the nucleoid. The sequence is that of Transcriptional regulator MraZ from Bordetella bronchiseptica (strain ATCC BAA-588 / NCTC 13252 / RB50) (Alcaligenes bronchisepticus).